The primary structure comprises 418 residues: Tyrosine--tRNA ligase (418 aa).

Tyr34 serves as a coordination point for L-tyrosine. Residues 39–48 (PTADSLHLGH) carry the 'HIGH' region motif. Tyr169 and Gln173 together coordinate L-tyrosine. Positions 229–233 (KFGKS) match the 'KMSKS' region motif. Lys232 is a binding site for ATP. The S4 RNA-binding domain occupies 352–418 (LNIVDLLVTA…GKKKYFVLTY (67 aa)).

This sequence belongs to the class-I aminoacyl-tRNA synthetase family. TyrS type 1 subfamily. In terms of assembly, homodimer.

Its subcellular location is the cytoplasm. It carries out the reaction tRNA(Tyr) + L-tyrosine + ATP = L-tyrosyl-tRNA(Tyr) + AMP + diphosphate + H(+). In terms of biological role, catalyzes the attachment of tyrosine to tRNA(Tyr) in a two-step reaction: tyrosine is first activated by ATP to form Tyr-AMP and then transferred to the acceptor end of tRNA(Tyr). This Streptococcus gordonii (strain Challis / ATCC 35105 / BCRC 15272 / CH1 / DL1 / V288) protein is Tyrosine--tRNA ligase.